A 427-amino-acid polypeptide reads, in one-letter code: MSTSFENKATNRGVITFTISQDKIKPALDKAFNKIKKDLNAPGFRKGHMPRPVFNQKFGEEVLYEDALNIVLPEAYEAAVTELGLDVVAQPKIDVVSMEKGKEWTLSAEVVTKPEVKLGDYKNLVVEVDASKEVSDEDVDAKIERERQNLAELIIKDGEAAQGDTVVIDFVGSVDGVEFDAGKGDNFSLELGSGQFIPGFEDQLVGAKAGDEVEVNVTFPESYQAEDLAGKAAKFMTTIHEVKTKEVPELDDELAKDIDEDVDTLEDLKVKYRKELEAAQETSYDDAVEGAAIELAVANAEIVDLPEEMIHEEVNRSVNEFMGNMQRQGISPEMYFQLTGTTQEDLHNPYSAEADKRVKTNLVIEAIAKAEGFEATDSEIEQEINDLATEYNMPADQVRSLLSADMLKHDIAMKKAVEVITSTASVK.

In terms of domain architecture, PPIase FKBP-type spans 163 to 248 (GDTVVIDFVG…IHEVKTKEVP (86 aa)).

This sequence belongs to the FKBP-type PPIase family. Tig subfamily.

It is found in the cytoplasm. It carries out the reaction [protein]-peptidylproline (omega=180) = [protein]-peptidylproline (omega=0). Involved in protein export. Acts as a chaperone by maintaining the newly synthesized protein in an open conformation. Functions as a peptidyl-prolyl cis-trans isomerase. In Streptococcus pyogenes serotype M49 (strain NZ131), this protein is Trigger factor.